A 455-amino-acid polypeptide reads, in one-letter code: tRNA-2-methylthio-N(6)-dimethylallyladenosine synthase (455 aa).

An MTTase N-terminal domain is found at 18–133 (KKLFIETYGC…LPELIAAVEA (116 aa)). Positions 27, 63, 97, 171, 175, and 178 each coordinate [4Fe-4S] cluster. Residues 157 to 390 (CGNHISGFVS…IALQNRLSAE (234 aa)) form the Radical SAM core domain. The TRAM domain occupies 393–455 (QRCIGKTYEV…SSATLKGEEV (63 aa)).

Belongs to the methylthiotransferase family. MiaB subfamily. In terms of assembly, monomer. The cofactor is [4Fe-4S] cluster.

It localises to the cytoplasm. It carries out the reaction N(6)-dimethylallyladenosine(37) in tRNA + (sulfur carrier)-SH + AH2 + 2 S-adenosyl-L-methionine = 2-methylsulfanyl-N(6)-dimethylallyladenosine(37) in tRNA + (sulfur carrier)-H + 5'-deoxyadenosine + L-methionine + A + S-adenosyl-L-homocysteine + 2 H(+). Functionally, catalyzes the methylthiolation of N6-(dimethylallyl)adenosine (i(6)A), leading to the formation of 2-methylthio-N6-(dimethylallyl)adenosine (ms(2)i(6)A) at position 37 in tRNAs that read codons beginning with uridine. This Bacteroides thetaiotaomicron (strain ATCC 29148 / DSM 2079 / JCM 5827 / CCUG 10774 / NCTC 10582 / VPI-5482 / E50) protein is tRNA-2-methylthio-N(6)-dimethylallyladenosine synthase.